The chain runs to 2150 residues: A disintegrin and metalloproteinase with thrombospondin motifs gon-1 (2150 aa).

Positions 1-28 (MRSIGGSFHLLQPVVAALILLVVCLVYA) are cleaved as a signal peptide. Positions 29 to 273 (LQSGSGTISE…VIERKARSRR (245 aa)) are excised as a propeptide. N-linked (GlcNAc...) asparagine glycosylation is found at N134, N213, N243, and N248. Positions 280–493 (HYVEVLVVAD…GQTQCLFDQP (214 aa)) constitute a Peptidase M12B domain. 2 disulfides stabilise this stretch: C402-C488 and C440-C470. H424 provides a ligand contact to Zn(2+). The active site involves E425. Zn(2+)-binding residues include H428 and H434. A Disintegrin domain is found at 503-587 (FVRDEPGKKY…RLAPESLTKI (85 aa)). One can recognise a TSP type-1 1 domain in the interval 588-643 (DGQWGDWRSWGECSRTCGGGVQKGLRDCDSPKPRNGGKYCVGQRERYRSCNTQECP). 3 disulfide bridges follow: C600–C637, C604–C642, and C615–C627. Residue N842 is glycosylated (N-linked (GlcNAc...) asparagine). TSP type-1 domains are found at residues 943–1003 (CSTR…IDCS), 1004–1057 (GRKW…RECN), 1060–1115 (PCPR…HACT), 1116–1165 (WWQF…KPCH), 1168–1227 (SCPK…GTCP), 1228–1277 (FWRN…QTCH), 1280–1339 (PCTS…DTCD), 1352–1409 (PPIR…RDCS), 1410–1469 (YWKM…EPCP), 1474–1524 (HIGS…ELCP), and 1527–1585 (TNNS…PPCR). Residues N1139 and N1199 are each glycosylated (N-linked (GlcNAc...) asparagine). N1370 and N1432 each carry an N-linked (GlcNAc...) asparagine glycan. N-linked (GlcNAc...) asparagine glycans are attached at residues N1528, N1590, N1606, and N1654. Residues 1590 to 1614 (NKTSSASMTSLSSSNSNTTSSASAS) form a disordered region. Low complexity predominate over residues 1592 to 1614 (TSSASMTSLSSSNSNTTSSASAS). 5 consecutive TSP type-1 domains span residues 1621–1675 (PVVS…VRCR), 1678–1736 (HCPR…VACP), 1737–1793 (AYRW…DTSN), 1794–1866 (CPYE…NPCD), and 1867–1924 (SEFK…RNCL). 6 disulfide bridges follow: C1679–C1718, C1690–C1694, C1690–C1730, C1694–C1735, C1705–C1718, and C1730–C1735. 2 N-linked (GlcNAc...) asparagine glycosylation sites follow: N1828 and N1855. Residues 1924 to 2123 (LPSTCQELKS…RYKGLIFEVN (200 aa)) form the GON domain. N-linked (GlcNAc...) asparagine glycans are attached at residues N1942, N1960, and N1997.

Zn(2+) is required as a cofactor. Expressed by the gonadal distal tip cells (DTCs). Expressed in muscles, including body wall, vulval and anal depressor muscles. Expressed in motor neurons and in ASI and ASJ neurons.

The protein localises to the secreted. It localises to the extracellular space. Its subcellular location is the extracellular matrix. It is found in the basement membrane. The protein resides in the endoplasmic reticulum. The protein localises to the golgi apparatus. Secreted metalloprotease required for distal tip cell (DTC) migration along the body wall basement membranes, a key step that promotes gonad morphogenesis. Probably acts by remodeling the basement membrane during cell migration. Required to restrict presynaptic growth at the neuromuscular junctions (NMJ) in late larval stage and in adult motor neurons, probably by controlling collagen IV emb-9 degradation, a component of the synapse basement membrane. Also involved in the organization of adult muscle morphology. Has a protease-independent function in promoting the transport from the endoplasmic reticulum to the Golgi apparatus of a variety of secretory cargos. Required for the secretion of insulin-like peptide ins-7, daf-28 and ins-18 and TGF beta-like protein daf-7. In peripheral tissues, negatively regulates insulin-mediated daf-16 translocation and thereby negatively regulates lifespan and dauer formation. The polypeptide is A disintegrin and metalloproteinase with thrombospondin motifs gon-1 (Caenorhabditis elegans).